The chain runs to 91 residues: Acylphosphatase (91 aa).

Residues 3–89 (AKHLILSGRV…PAEPGFVKRA (87 aa)) form the Acylphosphatase-like domain. Residues arginine 18 and asparagine 36 contribute to the active site.

This sequence belongs to the acylphosphatase family.

The catalysed reaction is an acyl phosphate + H2O = a carboxylate + phosphate + H(+). The protein is Acylphosphatase (acyP) of Acidiphilium cryptum (strain JF-5).